The chain runs to 222 residues: Superoxide dismutase [Mn], mitochondrial (222 aa).

A mitochondrion-targeting transit peptide spans 1–24 (MLSRAACSTSRRLVPALSVLGSRQ). Histidine 50 provides a ligand contact to Mn(2+). Tyrosine 58 is subject to 3'-nitrotyrosine. Lysine 68 and lysine 75 each carry N6-acetyllysine; alternate. N6-succinyllysine; alternate is present on residues lysine 68 and lysine 75. Histidine 98 provides a ligand contact to Mn(2+). N6-acetyllysine; alternate occurs at positions 122 and 130. 2 positions are modified to N6-succinyllysine; alternate: lysine 122 and lysine 130. The Mn(2+) site is built by aspartate 183 and histidine 187. Lysine 202 bears the N6-acetyllysine mark.

The protein belongs to the iron/manganese superoxide dismutase family. In terms of assembly, homotetramer. Requires Mn(2+) as cofactor. Post-translationally, nitrated under oxidative stress. Nitration coupled with oxidation inhibits the catalytic activity. In terms of processing, acetylation at Lys-122 decreases enzymatic activity. Deacetylated by SIRT3 upon exposure to ionizing radiations or after long fasting. Polyubiquitinated; leading to proteasomal degradation. Deubiquitinated by USP36 which increases protein stability.

Its subcellular location is the mitochondrion matrix. The catalysed reaction is 2 superoxide + 2 H(+) = H2O2 + O2. Destroys superoxide anion radicals which are normally produced within the cells and which are toxic to biological systems. The polypeptide is Superoxide dismutase [Mn], mitochondrial (SOD2) (Bos taurus (Bovine)).